We begin with the raw amino-acid sequence, 656 residues long: DNA ligase (656 aa).

NAD(+)-binding positions include 32 to 36 (DAVYD) and 81 to 82 (SL). The N6-AMP-lysine intermediate role is filled by Lys112. Positions 133, 167, and 306 each coordinate NAD(+). The Zn(2+) site is built by Cys400, Cys403, Cys416, and Cys421. In terms of domain architecture, BRCT spans 577-656 (KSSSVFNNKT…ELLKRLKELD (80 aa)).

Belongs to the NAD-dependent DNA ligase family. LigA subfamily. Requires Mg(2+) as cofactor. The cofactor is Mn(2+).

The catalysed reaction is NAD(+) + (deoxyribonucleotide)n-3'-hydroxyl + 5'-phospho-(deoxyribonucleotide)m = (deoxyribonucleotide)n+m + AMP + beta-nicotinamide D-nucleotide.. Its function is as follows. DNA ligase that catalyzes the formation of phosphodiester linkages between 5'-phosphoryl and 3'-hydroxyl groups in double-stranded DNA using NAD as a coenzyme and as the energy source for the reaction. It is essential for DNA replication and repair of damaged DNA. The chain is DNA ligase from Helicobacter pylori (strain HPAG1).